The primary structure comprises 239 residues: MEINKKKILVVDDEISIRRILETRLSMIGYEVVTAADGEEALTIFQLEHPNLVVLDVMMPKLDGYGVCQELRKESDIPIIMLTALGDVADRITGLELGADDYVVKPFSPKELEARIRSLLRRTENPTLSTTSTNGENLQIGFLKIDINKRQVFKNGERIRLTGMEFSLLELLISKMGEPFSRAQILQEVWGYTPERHIDTRVVDVHISRLRSKLEENPSNPDLILTARGIGYLFQNTSN.

Positions 7–120 (KILVVDDEIS…ELEARIRSLL (114 aa)) constitute a Response regulatory domain. The residue at position 56 (Asp-56) is a 4-aspartylphosphate. Positions 76-94 (DIPIIMLTALGDVADRITG) form a DNA-binding region, H-T-H motif. The ompR/PhoB-type DNA-binding region spans 135–236 (GENLQIGFLK…ARGIGYLFQN (102 aa)).

The protein localises to the plastid. It is found in the cyanelle. In terms of biological role, probable promoter-specific protein mediating the interaction between DNA and RNA polymerase. The polypeptide is Probable transcriptional regulator ycf27 (ycf27) (Cyanophora paradoxa).